The chain runs to 191 residues: UPF0312 protein Shew185_3055 (191 aa).

Positions 1-22 are cleaved as a signal peptide; the sequence is MKKQLLSALIGASLLAPMAASA.

It belongs to the UPF0312 family. Type 1 subfamily.

It localises to the periplasm. The sequence is that of UPF0312 protein Shew185_3055 from Shewanella baltica (strain OS185).